The chain runs to 125 residues: Nuclear envelope phosphatase-regulatory subunit 1 (125 aa).

The next 2 membrane-spanning stretches (helical) occupy residues 33-53 (MILIVVSVCTATGAWNWLIDP) and 65-85 (WNHPFFTISCVTLIGLFFAGI).

This sequence belongs to the CNEP1R1 family.

Its subcellular location is the nucleus membrane. It localises to the cytoplasm. May form with the serine/threonine protein phosphatase ctdnep1 an active complex dephosphorylating and activating lipins. Lipins are phosphatidate phosphatases that catalyze the conversion of phosphatidic acid to diacylglycerol and control the metabolism of fatty acids at different levels. May indirectly modulate the lipid composition of nuclear and/or endoplasmic reticulum membranes and be required for proper nuclear membrane morphology and/or dynamics. May also indirectly regulate the production of lipid droplets and triacylglycerol. This Danio rerio (Zebrafish) protein is Nuclear envelope phosphatase-regulatory subunit 1 (cnep1r1).